Consider the following 131-residue polypeptide: Spermatocyte protein spe-27 (131 aa).

Residues 1 to 17 (MNKSLIFLLSFAYSCYS) form the signal peptide.

In terms of biological role, required for spermiogenesis. The sequence is that of Spermatocyte protein spe-27 (spe-27) from Caenorhabditis elegans.